Consider the following 158-residue polypeptide: Sorbin and SH3 domain-containing protein 2 (158 aa).

Residues Met-1–Gly-46 form the SoHo domain. The disordered stretch occupies residues His-28–Val-158. Positions Ser-50–Arg-66 are enriched in polar residues. Over residues Ser-71–Lys-81 the composition is skewed to basic and acidic residues. At Ser-73 the chain carries Phosphoserine. A compositionally biased stretch (pro residues) spans Pro-86–Leu-99. Basic and acidic residues predominate over residues Arg-100 to Pro-136. At Ala-153 the chain carries Alanine amide.

As to quaternary structure, interacts with ABL1/c-Abl, ABL2/v-Abl/Arg, ACTN, AKT1, CBL, PALLD and PAK1. Interacts with ABL, CBL, DNM1, DNM2, FLOT1, AFDN, PTK2B/PYK2, SAPAP, SPTAN1, SYNJ1, SYNJ2, VCL/vinculin, and WASF. Interacts with PTPN12 and WASF1 via its SH3 domains; this interaction may mediate the partial PTPN12 and WASF1 translocation to focal adhesion sites. Ubiquitinated by CBL. In terms of processing, dephosphorylated by PTPN12. As to expression, expressed in duodenum.

The protein resides in the cytoplasm. It localises to the perinuclear region. The protein localises to the apical cell membrane. Its subcellular location is the cell junction. It is found in the focal adhesion. The protein resides in the cell projection. It localises to the lamellipodium. Functionally, adapter protein that plays a role in the assembling of signaling complexes, being a link between ABL kinases and actin cytoskeleton. Can form complex with ABL1 and CBL, thus promoting ubiquitination and degradation of ABL1 or with AKT1 and PAK1, thus mediating AKT1-mediated activation of PAK1. May play a role in the regulation of pancreatic cell adhesion, possibly by acting on WASF1 phosphorylation, enhancing phosphorylation by ABL1, as well as dephosphorylation by PTPN12. Increases water and sodium absorption in the intestine and gall-bladder. This chain is Sorbin and SH3 domain-containing protein 2 (SORBS2), found in Sus scrofa (Pig).